The primary structure comprises 349 residues: Insulin gene enhancer protein ISL-1 (349 aa).

LIM zinc-binding domains lie at 17–70 and 79–133; these read CVGC…CKRD and CAKC…RADH. Residues 181–240 constitute a DNA-binding region (homeobox); the sequence is TTRVRTVLNEKQLHTLRTCYAANPRPDALMKEQLVEMTGLSPRVIRVWFQNKRCKDKKRS. The tract at residues 312-349 is disordered; that stretch reads VNFSEGGPGSNSTGSEVASMSSQLPDTPNSMVASPIEA. A compositionally biased stretch (polar residues) spans 321–343; the sequence is SNSTGSEVASMSSQLPDTPNSMV.

The protein localises to the nucleus. In terms of biological role, acts as a transcriptional regulator. Recognizes and binds to the consensus octamer binding site 5'-ATAATTAA-3' in promoter of target genes. Plays a fundamental role in the gene regulatory network essential for retinal ganglion cell (RGC) differentiation. Binds to insulin gene enhancer sequences. Defines subclasses of motoneurons that segregate into columns in the spinal cord and select distinct axon pathways. Acts in conjunction with LHX1, LHX3 and ISL2. Binds to insulin gene enhancer sequences. Essential for heart development. The protein is Insulin gene enhancer protein ISL-1 (ISL1) of Gallus gallus (Chicken).